An 823-amino-acid chain; its full sequence is Fibroblast growth factor receptor 2 (823 aa).

The N-terminal stretch at 1–23 (MVSWDSGCLICLVVVTMAGLSLA) is a signal peptide. Residues 24–379 (RPSFNLVVED…EFPTSPDYLE (356 aa)) lie on the Extracellular side of the membrane. Positions 27 to 128 (FNLVVEDATL…DTLYFIVNVT (102 aa)) constitute an Ig-like C2-type 1 domain. The cysteines at positions 65 and 110 are disulfide-linked. Asn-86, Asn-126, and Asn-148 each carry an N-linked (GlcNAc...) asparagine glycan. Ig-like C2-type domains follow at residues 156 to 249 (PYWT…YHLD) and 258 to 360 (PILQ…AWLT). Residues 163 to 180 (KMEKRLHAVPAANTVKFR) are heparin-binding. The cysteines at positions 181 and 233 are disulfide-linked. N-linked (GlcNAc...) asparagine glycosylation is found at Asn-230, Asn-243, Asn-267, Asn-299, Asn-320, and Asn-333. An intrachain disulfide couples Cys-280 to Cys-344. Residues 380–400 (IAIYCIGVFLIACMVLTVILC) traverse the membrane as a helical segment. Topologically, residues 401–823 (RMKNTTKKPD…YQHMNGSVKT (423 aa)) are cytoplasmic. Tyr-468 carries the phosphotyrosine; by autocatalysis modification. The region spanning 483-772 (LTLGKPLGEG…LTLTTNEEYL (290 aa)) is the Protein kinase domain. Residues 489-497 (LGEGCFGQV), Lys-519, 567-569 (EYA), and Asn-573 each bind ATP. Tyr-588 is modified (phosphotyrosine; by autocatalysis). The active-site Proton acceptor is Asp-628. Phosphotyrosine; by autocatalysis is present on residues Tyr-658, Tyr-659, and Tyr-771.

Belongs to the protein kinase superfamily. Tyr protein kinase family. Fibroblast growth factor receptor subfamily. As to quaternary structure, monomer. Homodimer after ligand binding. Autophosphorylated. Binding of FGF family members together with heparan sulfate proteoglycan or heparin promotes receptor dimerization and autophosphorylation on tyrosine residues. Autophosphorylation occurs in trans between the two FGFR molecules present in the dimer. Post-translationally, N-glycosylated in the endoplasmic reticulum. The N-glycan chains undergo further maturation to an Endo H-resistant form in the Golgi apparatus. In terms of processing, ubiquitinated. FGFR2 is rapidly ubiquitinated after autophosphorylation, leading to internalization and degradation. Subject to degradation both in lysosomes and by the proteasome.

It is found in the cell membrane. The protein resides in the golgi apparatus. The protein localises to the cytoplasmic vesicle. It carries out the reaction L-tyrosyl-[protein] + ATP = O-phospho-L-tyrosyl-[protein] + ADP + H(+). Its activity is regulated as follows. Present in an inactive conformation in the absence of bound ligand. Ligand binding leads to dimerization and activation by autophosphorylation on tyrosine residues. Its function is as follows. Tyrosine-protein kinase that acts as a cell-surface receptor for fibroblast growth factors and plays an essential role in the regulation of cell proliferation, differentiation, migration and apoptosis, and in the regulation of embryonic development. Required for normal embryonic patterning, limb bud development, lung morphogenesis, osteogenesis and skin development. Plays an essential role in the regulation of osteoblast differentiation, proliferation and apoptosis, and is required for normal skeleton development. Promotes cell proliferation in keratinocytes and immature osteoblasts, but promotes apoptosis in differentiated osteoblasts. Phosphorylates PLCG1, FRS2 and PAK4. Ligand binding leads to the activation of several signaling cascades. Activation of PLCG1 leads to the production of the cellular signaling molecules diacylglycerol and inositol 1,4,5-trisphosphate. Phosphorylation of FRS2 triggers recruitment of GRB2, GAB1, PIK3R1 and SOS1, and mediates activation of RAS, MAPK1/ERK2, MAPK3/ERK1 and the MAP kinase signaling pathway, as well as of the AKT1 signaling pathway. FGFR2 signaling is down-regulated by ubiquitination, internalization and degradation. Mutations that lead to constitutive kinase activation or impair normal FGFR2 maturation, internalization and degradation lead to aberrant signaling. Over-expressed FGFR2 promotes activation of STAT1. The sequence is that of Fibroblast growth factor receptor 2 (FGFR2) from Gallus gallus (Chicken).